Consider the following 724-residue polypeptide: Probable zinc transporter MSC2 (724 aa).

At 1-6 (MNLQEL) the chain is on the cytoplasmic side. The chain crosses the membrane as a helical span at residues 7–27 (LAKVPLLLSYPTIILSSNLIV). Residues 28–58 (PSHNDLISRAASTSAAEYADEKLIFFSTDHA) are Lumenal-facing. A helical membrane pass occupies residues 59–79 (IRLIFLPTFVASSFNLFAHYF). Over 80 to 90 (NFINYSSRRKY) the chain is Cytoplasmic. Residues 91–111 (YVLFTAIYFLSILTAIFHPIQ) traverse the membrane as a helical segment. Residues 112–134 (STCITLLIIKLLTTADESSPKIA) are Lumenal-facing. Residues 135–155 (LNFKTILKTFVPFITLTLVIL) traverse the membrane as a helical segment. Residues 156-174 (RWDPSFDASSGDVNKISTS) lie on the Cytoplasmic side of the membrane. Residues 175–195 (LAAYALLILTLRYASPLILST) form a helical membrane-spanning segment. Over 196 to 219 (LSSSIGVVSKDTSVAQHSISRNKR) the chain is Lumenal. A helical transmembrane segment spans residues 220–240 (FPLILVLPIFSFVLLYLMTIV). Residues 241-244 (NKTY) are Cytoplasmic-facing. Residues 245 to 265 (NIQLLMVFVFFGCLSIFFLSL) traverse the membrane as a helical segment. The Lumenal segment spans residues 266-298 (KDLFTEDGNQKKGGQEDEYCRMFDIKYMISYLW). Residues 299-319 (LTRFTILLTGIMAIVVHFLSF) form a helical membrane-spanning segment. Residues 320-386 (NEITSSIKTD…KQMALNKDTR (67 aa)) are Cytoplasmic-facing. A helical membrane pass occupies residues 387–407 (SIFSFLLLNTAFMFVQLLYSF). The Lumenal portion of the chain corresponds to 408–417 (RSKSLGLLSD). The chain crosses the membrane as a helical span at residues 418 to 438 (SLHMALDCTSLLLGLIAGVLT). Over 439–453 (KKPASDKFPFGLNYL) the chain is Cytoplasmic. A helical membrane pass occupies residues 454-474 (GTLAGFTNGVLLLGIVCGIFV). Topologically, residues 475–491 (EAIERIFNPIHLHATNE) are lumenal. A helical transmembrane segment spans residues 492–512 (LLVVATLGLLVNLVGLFAFDH). At 513-528 (GAHDHGGTDNENMKGI) the chain is on the cytoplasmic side. Residues 529–549 (FLHILADTLGSVGVVISTLLI) form a helical membrane-spanning segment. At 550–563 (KLTHWPIFDPIASL) the chain is on the lumenal side. A helical membrane pass occupies residues 564–584 (LIGSLILLSALPLLKSTSANI). At 585–724 (LLRLDDKKHN…NSLPLQPIAN (140 aa)) the chain is on the cytoplasmic side. The interval 614–653 (TPRFWPTESGSSGHSHAHTHSHAENHSHEHHHDQKNGSQE) is disordered. The segment covering 634-648 (SHAENHSHEHHHDQK) has biased composition (basic and acidic residues).

Belongs to the cation diffusion facilitator (CDF) transporter (TC 2.A.4) family. SLC30A subfamily.

It localises to the endoplasmic reticulum membrane. Its subcellular location is the nucleus membrane. Probably act as a zinc ion transporter moving zinc from the nucleus/endoplasmic reticulum to the cytoplasm. Involved in zinc ion homeostasis and cellular distribution. The chain is Probable zinc transporter MSC2 (MSC2) from Saccharomyces cerevisiae (strain ATCC 204508 / S288c) (Baker's yeast).